The following is a 235-amino-acid chain: Mediator of RNA polymerase II transcription subunit 29 (235 aa).

Low complexity predominate over residues 1–14; that stretch reads MMNQMGMMMQQQGV. The disordered stretch occupies residues 1–54; it reads MMNQMGMMMQQQGVGVPGGPGGVGGVGMPGPGGVGVAPGMMQSPQMQQAQQQQV. Positions 15-36 are enriched in gly residues; sequence GVPGGPGGVGGVGMPGPGGVGV. Residues 37–54 are compositionally biased toward low complexity; the sequence is APGMMQSPQMQQAQQQQV.

The protein belongs to the Mediator complex subunit 29 family. As to quaternary structure, component of the Mediator complex.

Its subcellular location is the nucleus. Component of the Mediator complex, a coactivator involved in the regulated transcription of nearly all RNA polymerase II-dependent genes. Mediator functions as a bridge to convey information from gene-specific regulatory proteins to the basal RNA polymerase II transcription machinery. Mediator is recruited to promoters by direct interactions with regulatory proteins and serves as a scaffold for the assembly of a functional preinitiation complex with RNA polymerase II and the general transcription factors. The protein is Mediator of RNA polymerase II transcription subunit 29 (ix) of Anopheles gambiae (African malaria mosquito).